The chain runs to 95 residues: Co-chaperonin GroES (95 aa).

This sequence belongs to the GroES chaperonin family. In terms of assembly, heptamer of 7 subunits arranged in a ring. Interacts with the chaperonin GroEL.

The protein localises to the cytoplasm. Its function is as follows. Together with the chaperonin GroEL, plays an essential role in assisting protein folding. The GroEL-GroES system forms a nano-cage that allows encapsulation of the non-native substrate proteins and provides a physical environment optimized to promote and accelerate protein folding. GroES binds to the apical surface of the GroEL ring, thereby capping the opening of the GroEL channel. The sequence is that of Co-chaperonin GroES from Chlorobaculum parvum (strain DSM 263 / NCIMB 8327) (Chlorobium vibrioforme subsp. thiosulfatophilum).